Consider the following 195-residue polypeptide: ATP-dependent Clp protease proteolytic subunit (195 aa).

The active-site Nucleophile is the serine 98. Residue histidine 123 is part of the active site.

This sequence belongs to the peptidase S14 family. In terms of assembly, fourteen ClpP subunits assemble into 2 heptameric rings which stack back to back to give a disk-like structure with a central cavity, resembling the structure of eukaryotic proteasomes.

Its subcellular location is the cytoplasm. It carries out the reaction Hydrolysis of proteins to small peptides in the presence of ATP and magnesium. alpha-casein is the usual test substrate. In the absence of ATP, only oligopeptides shorter than five residues are hydrolyzed (such as succinyl-Leu-Tyr-|-NHMec, and Leu-Tyr-Leu-|-Tyr-Trp, in which cleavage of the -Tyr-|-Leu- and -Tyr-|-Trp bonds also occurs).. Functionally, cleaves peptides in various proteins in a process that requires ATP hydrolysis. Has a chymotrypsin-like activity. Plays a major role in the degradation of misfolded proteins. The protein is ATP-dependent Clp protease proteolytic subunit of Helicobacter pylori (strain J99 / ATCC 700824) (Campylobacter pylori J99).